Consider the following 488-residue polypeptide: Glutamate synthase [NADPH] small chain (488 aa).

Residues 38 to 69 form the 4Fe-4S ferredoxin-type domain; it reads ESLRQQATRCMDCGIPFCHNGCPLGNLIPEWN.

The cofactor is [4Fe-4S] cluster.

It carries out the reaction 2 L-glutamate + NADP(+) = L-glutamine + 2-oxoglutarate + NADPH + H(+). It participates in amino-acid biosynthesis; L-glutamate biosynthesis via GLT pathway; L-glutamate from 2-oxoglutarate and L-glutamine (NADP(+) route): step 1/1. The chain is Glutamate synthase [NADPH] small chain (gltD) from Mycobacterium tuberculosis (strain CDC 1551 / Oshkosh).